The sequence spans 1122 residues: Receptor-type guanylate cyclase gcy-5 (1122 aa).

Residues 1 to 19 (MRLLYFSMVLLWVLGASEC) form the signal peptide. Topologically, residues 20 to 486 (QVIPSSRRTL…CPVQFWDQYG (467 aa)) are extracellular. N-linked (GlcNAc...) asparagine glycosylation is found at N252, N299, N344, N350, N378, N434, and N439. The helical transmembrane segment at 487-507 (VLIFVASIVLIFLICIMLMCF) threads the bilayer. The Cytoplasmic portion of the chain corresponds to 508-1122 (GFMIRGRRAE…KSKMDTLKVV (615 aa)). The interval 536–562 (QKEKRKPNSRRSLQSGPSTITGESKMT) is disordered. In terms of domain architecture, Protein kinase spans 542–830 (PNSRRSLQSG…NTNLMDHVFN (289 aa)). Residues 545–559 (RRSLQSGPSTITGES) are compositionally biased toward polar residues. A Guanylate cyclase domain is found at 888-1018 (TVLFSDVVKF…DTVNTASRME (131 aa)). Residues 1071–1122 (SDTKSLSTRTTPPITDENWPPQMKEDLKKRAVTPYPERQRSGKSKMDTLKVV) form a disordered region. Over residues 1074-1083 (KSLSTRTTPP) the composition is skewed to polar residues. Basic and acidic residues predominate over residues 1107 to 1122 (ERQRSGKSKMDTLKVV).

The protein belongs to the adenylyl cyclase class-4/guanylyl cyclase family. As to expression, expressed in both ASEL and ASER neurons during early embryonic stages and becomes specifically expressed in ASER neuron in early larval stage.

The protein localises to the cell membrane. The enzyme catalyses GTP = 3',5'-cyclic GMP + diphosphate. In terms of biological role, guanylate cyclase involved in the production of the second messenger cGMP. Unlike other guanylate cyclases expressed in ASE neurons, may not play a role in chemotaxis responses to salt ions mediated by ASE sensory neurons. The chain is Receptor-type guanylate cyclase gcy-5 from Caenorhabditis elegans.